A 158-amino-acid chain; its full sequence is Endoribonuclease YbeY (158 aa).

Zn(2+) contacts are provided by His118, His122, and His128.

This sequence belongs to the endoribonuclease YbeY family. Zn(2+) is required as a cofactor.

Its subcellular location is the cytoplasm. Its function is as follows. Single strand-specific metallo-endoribonuclease involved in late-stage 70S ribosome quality control and in maturation of the 3' terminus of the 16S rRNA. The protein is Endoribonuclease YbeY of Alteromonas mediterranea (strain DSM 17117 / CIP 110805 / LMG 28347 / Deep ecotype).